Consider the following 238-residue polypeptide: Ubiquitin-conjugating enzyme E2 R2 (238 aa).

Residues 8-174 (SSQKALMLEL…IRKQVSATKA (167 aa)) enclose the UBC core domain. Residue C93 is the Glycyl thioester intermediate of the active site. Positions 98-113 (HPPVDDPQSGELPSER) are important for ubiquitin transfer. A disordered region spans residues 194–238 (TKVPSNDNSSDLLYDDLYDDDIDDEDEEEEDADCYDDDDSGNEES). Residues 206–238 (LYDDLYDDDIDDEDEEEEDADCYDDDDSGNEES) show a composition bias toward acidic residues. S233 bears the Phosphoserine; by CK2 mark.

It belongs to the ubiquitin-conjugating enzyme family. In terms of assembly, interacts with multiple Cul1-RING E3 ubiquitin-protein ligase complexes, also known as SCF (SKP1-CUL1-F-box protein) complexes, including SCF(FBXW7) and SCF(BTRC). Interacts with multiple Cul2-RING (CRL2) E3 ubiquitin-protein ligase complexes, also known as ECS (Elongin BC-CUL2/5-SOCS-box protein) complexes, including CRL2(FEM1C) and ECS(VHL). When phosphorylated, interacts with beta-TrCP (BTRC).

The catalysed reaction is S-ubiquitinyl-[E1 ubiquitin-activating enzyme]-L-cysteine + [E2 ubiquitin-conjugating enzyme]-L-cysteine = [E1 ubiquitin-activating enzyme]-L-cysteine + S-ubiquitinyl-[E2 ubiquitin-conjugating enzyme]-L-cysteine.. It participates in protein modification; protein ubiquitination. Neddylation of CUL2 in the CRL2(FEM1C) E3 ligase complex increases substrate affinity of UBE2R2 and the ubiquitin-transfer rate in the E2-E3 complex. Its function is as follows. E2 ubiquitin-conjugating enzyme that accepts ubiquitin from an E1 ubiquitin-activating protein, and catalyzes its covalent attachment to other proteins by an E3 ubiquitin-protein ligase complex. In vitro catalyzes monoubiquitination and 'Lys-48'-linked polyubiquitination. Works in collaboration with various Cul1-RING and Cul2-RING E3 ligase complexes. May be involved in degradation of katenin. This Homo sapiens (Human) protein is Ubiquitin-conjugating enzyme E2 R2 (UBE2R2).